A 171-amino-acid polypeptide reads, in one-letter code: Adenine phosphoribosyltransferase (171 aa).

This sequence belongs to the purine/pyrimidine phosphoribosyltransferase family. As to quaternary structure, homodimer.

The protein localises to the cytoplasm. It catalyses the reaction AMP + diphosphate = 5-phospho-alpha-D-ribose 1-diphosphate + adenine. The protein operates within purine metabolism; AMP biosynthesis via salvage pathway; AMP from adenine: step 1/1. Functionally, catalyzes a salvage reaction resulting in the formation of AMP, that is energically less costly than de novo synthesis. In Citrifermentans bemidjiense (strain ATCC BAA-1014 / DSM 16622 / JCM 12645 / Bem) (Geobacter bemidjiensis), this protein is Adenine phosphoribosyltransferase.